Consider the following 288-residue polypeptide: 4-hydroxybenzoate octaprenyltransferase (288 aa).

The next 6 helical transmembrane spans lie at 20–40 (IGTL…AGGL), 43–63 (LKVF…GCII), 96–116 (LFVV…PLVV), 210–230 (QIIG…GMVA), 234–254 (AIYA…QKLI), and 262–282 (CFTA…ALML).

The protein belongs to the UbiA prenyltransferase family. Requires Mg(2+) as cofactor.

Its subcellular location is the cell inner membrane. The enzyme catalyses all-trans-octaprenyl diphosphate + 4-hydroxybenzoate = 4-hydroxy-3-(all-trans-octaprenyl)benzoate + diphosphate. It participates in cofactor biosynthesis; ubiquinone biosynthesis. Functionally, catalyzes the prenylation of para-hydroxybenzoate (PHB) with an all-trans polyprenyl group. Mediates the second step in the final reaction sequence of ubiquinone-8 (UQ-8) biosynthesis, which is the condensation of the polyisoprenoid side chain with PHB, generating the first membrane-bound Q intermediate 3-octaprenyl-4-hydroxybenzoate. This chain is 4-hydroxybenzoate octaprenyltransferase, found in Shewanella pealeana (strain ATCC 700345 / ANG-SQ1).